Reading from the N-terminus, the 286-residue chain is Glucose import system permease protein GlcT (286 aa).

6 consecutive transmembrane segments (helical) span residues 6–26 (TIIL…LVIW), 71–91 (VILV…LYFL), 103–123 (IVIY…LWLF), 154–174 (LVLV…LAGF), 199–219 (ILIP…FLFS), and 260–280 (VATM…LTVI). Residues 63-275 (LLHSIELSVI…LIATIIIIPY (213 aa)) form the ABC transmembrane type-1 domain.

The protein belongs to the binding-protein-dependent transport system permease family. The complex is composed of two ATP-binding proteins (GlcV), two transmembrane proteins (GlcT and GlcU) and a solute-binding protein (GlcS).

It is found in the cell membrane. Part of the ABC transporter complex GlcSTUV involved in glucose uptake. Responsible for the translocation of the substrate across the membrane. In Saccharolobus solfataricus (strain ATCC 35092 / DSM 1617 / JCM 11322 / P2) (Sulfolobus solfataricus), this protein is Glucose import system permease protein GlcT.